We begin with the raw amino-acid sequence, 251 residues long: UPF0309 protein SAV_3856 (251 aa).

The 185-residue stretch at 36–220 folds into the SIS domain; sequence IADTVADGGR…AGTLADRGIE (185 aa).

It belongs to the UPF0309 family.

This is UPF0309 protein SAV_3856 from Streptomyces avermitilis (strain ATCC 31267 / DSM 46492 / JCM 5070 / NBRC 14893 / NCIMB 12804 / NRRL 8165 / MA-4680).